A 348-amino-acid polypeptide reads, in one-letter code: Uroporphyrinogen decarboxylase (348 aa).

Residues 28–32 (RQAGR), D78, Y154, T209, and H325 contribute to the substrate site.

It belongs to the uroporphyrinogen decarboxylase family. In terms of assembly, homodimer.

It is found in the cytoplasm. It catalyses the reaction uroporphyrinogen III + 4 H(+) = coproporphyrinogen III + 4 CO2. It functions in the pathway porphyrin-containing compound metabolism; protoporphyrin-IX biosynthesis; coproporphyrinogen-III from 5-aminolevulinate: step 4/4. Catalyzes the decarboxylation of four acetate groups of uroporphyrinogen-III to yield coproporphyrinogen-III. This chain is Uroporphyrinogen decarboxylase, found in Rhodopseudomonas palustris (strain BisB5).